Reading from the N-terminus, the 515-residue chain is Methionine--tRNA ligase (515 aa).

Residues 13-23 (AYPNGKPHIGH) carry the 'HIGH' region motif. The 'KMSKS' region motif lies at 300–304 (KMSKS). K303 provides a ligand contact to ATP.

The protein belongs to the class-I aminoacyl-tRNA synthetase family. MetG type 2B subfamily. In terms of assembly, monomer.

Its subcellular location is the cytoplasm. The enzyme catalyses tRNA(Met) + L-methionine + ATP = L-methionyl-tRNA(Met) + AMP + diphosphate. In terms of biological role, is required not only for elongation of protein synthesis but also for the initiation of all mRNA translation through initiator tRNA(fMet) aminoacylation. The chain is Methionine--tRNA ligase from Brucella suis biovar 1 (strain 1330).